A 98-amino-acid chain; its full sequence is Putative pterin-4-alpha-carbinolamine dehydratase (98 aa).

The protein belongs to the pterin-4-alpha-carbinolamine dehydratase family.

The enzyme catalyses (4aS,6R)-4a-hydroxy-L-erythro-5,6,7,8-tetrahydrobiopterin = (6R)-L-erythro-6,7-dihydrobiopterin + H2O. This Parasynechococcus marenigrum (strain WH8102) protein is Putative pterin-4-alpha-carbinolamine dehydratase.